Here is a 223-residue protein sequence, read N- to C-terminus: CKLF-like MARVEL transmembrane domain-containing protein 5 (223 aa).

An MARVEL domain is found at 29 to 213; sequence FLTSHKGILL…DAFKIYRTEM (185 aa). Transmembrane regions (helical) follow at residues 35–55, 56–76, 162–182, and 186–206; these read GILLETELALTLIIFICFTAS, ISAYMAAALLEFFITLAFLFL, FLRCVSAIIIFLVVSFAAVTS, and AAIAAFVFGIILVSIFAYDAF.

Belongs to the chemokine-like factor family. As to expression, highly expressed in the brain.

The protein localises to the membrane. This is CKLF-like MARVEL transmembrane domain-containing protein 5 (CMTM5) from Homo sapiens (Human).